The primary structure comprises 273 residues: Putative pyruvate, phosphate dikinase regulatory protein 2 (273 aa).

ADP is bound at residue 151–158 (GISRTSKT).

The protein belongs to the pyruvate, phosphate/water dikinase regulatory protein family. PDRP subfamily.

It catalyses the reaction N(tele)-phospho-L-histidyl/L-threonyl-[pyruvate, phosphate dikinase] + ADP = N(tele)-phospho-L-histidyl/O-phospho-L-threonyl-[pyruvate, phosphate dikinase] + AMP + H(+). The enzyme catalyses N(tele)-phospho-L-histidyl/O-phospho-L-threonyl-[pyruvate, phosphate dikinase] + phosphate + H(+) = N(tele)-phospho-L-histidyl/L-threonyl-[pyruvate, phosphate dikinase] + diphosphate. Its function is as follows. Bifunctional serine/threonine kinase and phosphorylase involved in the regulation of the pyruvate, phosphate dikinase (PPDK) by catalyzing its phosphorylation/dephosphorylation. This chain is Putative pyruvate, phosphate dikinase regulatory protein 2, found in Staphylococcus saprophyticus subsp. saprophyticus (strain ATCC 15305 / DSM 20229 / NCIMB 8711 / NCTC 7292 / S-41).